A 522-amino-acid chain; its full sequence is Probable mannosyltransferase KTR5 (522 aa).

The Cytoplasmic segment spans residues 1-16; that stretch reads MLLIRRTINAFLGCIH. Residues 17–37 traverse the membrane as a helical; Signal-anchor for type II membrane protein segment; the sequence is CNLTATCILIAFVITMYVVLV. The stem region stretch occupies residues 38-82; the sequence is SEPASVDGTMGNFLPFSKMDLATKRDRPFYSNCVNTQDYLLNPSY. Over 38–522 the chain is Lumenal; that stretch reads SEPASVDGTM…REDYLRQFGN (485 aa). The tract at residues 83 to 522 is catalytic; the sequence is IKQNASFVML…REDYLRQFGN (440 aa). A glycan (N-linked (GlcNAc...) asparagine) is linked at Asn-86. Glu-363 (nucleophile) is an active-site residue.

This sequence belongs to the glycosyltransferase 15 family.

The protein localises to the membrane. Functionally, possible glycosyltransferase that transfers an alpha-D-mannosyl residue from GDP-mannose into lipid-linked oligosaccharide, forming an alpha-(1-&gt;2)-D-mannosyl-D-mannose linkage. The chain is Probable mannosyltransferase KTR5 (KTR5) from Saccharomyces cerevisiae (strain ATCC 204508 / S288c) (Baker's yeast).